The sequence spans 384 residues: Substance-K receptor (384 aa).

The Extracellular segment spans residues 1–32 (MGAHAIVTDANISSSLENNTTGITAFSMPGWQ). Residues Asn11, Asn18, and Asn19 are each glycosylated (N-linked (GlcNAc...) asparagine). Residues 33 to 56 (LALWATAYLVLVLVAVTGNATVIW) traverse the membrane as a helical segment. The Cytoplasmic segment spans residues 57-69 (IILAHQRMRTVTN). The chain crosses the membrane as a helical span at residues 70–90 (YFIVNLALADLCMAAFNAAFN). Residues 91 to 107 (FVYASHNIWYFGRAFCH) are Extracellular-facing. The cysteines at positions 106 and 181 are disulfide-linked. The chain crosses the membrane as a helical span at residues 108-129 (FQNLFPITAMFVSIYSMTAIAA). At 130–149 (DRYVAIVHPFQPRLSAPGTR) the chain is on the cytoplasmic side. A helical membrane pass occupies residues 150–170 (AVIAGIWLLALALAFPQCFYS). Topologically, residues 171–196 (TITMDQGATKCVVVWPEDNGSKMLLL) are extracellular. Residues 197–218 (YHLVVIALIYVLPLLVMLLAYS) traverse the membrane as a helical segment. Residues 219-251 (VIGLTLWRREVPRHQVHGASLRHLRAKKKFVKT) are Cytoplasmic-facing. Residues 252 to 272 (MVLVVVTFAICWLPYHFYFIL) traverse the membrane as a helical segment. Over 273-290 (GSFQEDIYYHKFIQQVYL) the chain is Extracellular. Residues 291–310 (ALFWLAMSSTMYNPIIYCCL) form a helical membrane-spanning segment. Topologically, residues 311–384 (NHRFRSGFRL…GPQDGLPDEP (74 aa)) are cytoplasmic. A lipid anchor (S-palmitoyl cysteine) is attached at Cys324.

This sequence belongs to the G-protein coupled receptor 1 family.

It is found in the cell membrane. Its function is as follows. This is a receptor for the tachykinin neuropeptide substance K (neurokinin A). It is associated with G proteins that activate a phosphatidylinositol-calcium second messenger system. In Canis lupus familiaris (Dog), this protein is Substance-K receptor (TACR2).